A 372-amino-acid polypeptide reads, in one-letter code: Bifunctional enzyme IspD/IspF (372 aa).

Residues 1–210 are 2-C-methyl-D-erythritol 4-phosphate cytidylyltransferase; the sequence is MLDLSLIMLG…LNLNSPSNDI (210 aa). The segment at 211 to 372 is 2-C-methyl-D-erythritol 2,4-cyclodiphosphate synthase; it reads FCGNGFDVHA…LKYFNWRNVL (162 aa). 2 residues coordinate a divalent metal cation: D217 and H219. Residues 217–219 and 243–244 each bind 4-CDP-2-C-methyl-D-erythritol 2-phosphate; these read DVH and HS. An a divalent metal cation-binding site is contributed by H251. 4-CDP-2-C-methyl-D-erythritol 2-phosphate-binding positions include 265–267, 270–274, 341–344, F348, and R351; these read DIG, YPDND, and TTTE.

In the N-terminal section; belongs to the IspD/TarI cytidylyltransferase family. IspD subfamily. It in the C-terminal section; belongs to the IspF family. The cofactor is a divalent metal cation.

The catalysed reaction is 2-C-methyl-D-erythritol 4-phosphate + CTP + H(+) = 4-CDP-2-C-methyl-D-erythritol + diphosphate. It carries out the reaction 4-CDP-2-C-methyl-D-erythritol 2-phosphate = 2-C-methyl-D-erythritol 2,4-cyclic diphosphate + CMP. It functions in the pathway isoprenoid biosynthesis; isopentenyl diphosphate biosynthesis via DXP pathway; isopentenyl diphosphate from 1-deoxy-D-xylulose 5-phosphate: step 2/6. It participates in isoprenoid biosynthesis; isopentenyl diphosphate biosynthesis via DXP pathway; isopentenyl diphosphate from 1-deoxy-D-xylulose 5-phosphate: step 4/6. Bifunctional enzyme that catalyzes the formation of 4-diphosphocytidyl-2-C-methyl-D-erythritol from CTP and 2-C-methyl-D-erythritol 4-phosphate (MEP) (IspD), and catalyzes the conversion of 4-diphosphocytidyl-2-C-methyl-D-erythritol 2-phosphate (CDP-ME2P) to 2-C-methyl-D-erythritol 2,4-cyclodiphosphate (ME-CPP) with a corresponding release of cytidine 5-monophosphate (CMP) (IspF). The sequence is that of Bifunctional enzyme IspD/IspF from Campylobacter fetus subsp. fetus (strain 82-40).